Reading from the N-terminus, the 193-residue chain is Probable GTP-binding protein EngB (193 aa).

The EngB-type G domain occupies 22–193 (MYPEISFIGR…ELWQIIEDLL (172 aa)). GTP is bound by residues 30–37 (GRSNVGKS), 57–61 (GKTRT), 75–78 (DLPG), 142–145 (TKMD), and 174–176 (FSS). Residues S37 and T59 each coordinate Mg(2+).

Belongs to the TRAFAC class TrmE-Era-EngA-EngB-Septin-like GTPase superfamily. EngB GTPase family. It depends on Mg(2+) as a cofactor.

Its function is as follows. Necessary for normal cell division and for the maintenance of normal septation. This Natranaerobius thermophilus (strain ATCC BAA-1301 / DSM 18059 / JW/NM-WN-LF) protein is Probable GTP-binding protein EngB.